Consider the following 403-residue polypeptide: Pyruvate, phosphate dikinase regulatory protein 1, chloroplastic (403 aa).

Residues 1 to 86 (MALLSAMKLQ…NTTGPMRPIE (86 aa)) constitute a chloroplast transit peptide. Residues 1-108 (MALLSAMKLQ…DVSSSSNGVS (108 aa)) form a disordered region. Low complexity-rich tracts occupy residues 17 to 26 (SSNLNPNSKP), 69 to 80 (STITNGSNNTTG), and 87 to 108 (SSSR…NGVS). Residue 269–276 (GVSRTGKT) participates in ADP binding.

The protein belongs to the pyruvate, phosphate/water dikinase regulatory protein family. PDRP subfamily. Interacts with PPDK1. Expressed in green tissues.

The protein localises to the plastid. Its subcellular location is the chloroplast stroma. The enzyme catalyses N(tele)-phospho-L-histidyl/L-threonyl-[pyruvate, phosphate dikinase] + ADP = N(tele)-phospho-L-histidyl/O-phospho-L-threonyl-[pyruvate, phosphate dikinase] + AMP + H(+). It catalyses the reaction N(tele)-phospho-L-histidyl/O-phospho-L-threonyl-[pyruvate, phosphate dikinase] + phosphate + H(+) = N(tele)-phospho-L-histidyl/L-threonyl-[pyruvate, phosphate dikinase] + diphosphate. With respect to regulation, regulated by light/dark exposure. In terms of biological role, bifunctional serine/threonine kinase and phosphorylase involved in the dark/light-mediated regulation of PPDK by catalyzing its phosphorylation/dephosphorylation. Dark/light-induced changes in stromal concentrations of the competing ADP and Pi substrates govern the direction of the reaction. In the dark, phosphorylates the catalytic intermediate of PPDK (PPDK-HisP), inactivating it. Light exposure induces the phosphorolysis reaction that reactivates PPDK. Unlike the kinase function which can utilize either Thr or Ser as target, the phosphorylase function has a strict substrate requirement for threonyl phosphate. The polypeptide is Pyruvate, phosphate dikinase regulatory protein 1, chloroplastic (RP1) (Arabidopsis thaliana (Mouse-ear cress)).